An 87-amino-acid chain; its full sequence is DNA-directed RNA polymerase subunit omega (87 aa).

It belongs to the RNA polymerase subunit omega family. The RNAP catalytic core consists of 2 alpha, 1 beta, 1 beta' and 1 omega subunit. When a sigma factor is associated with the core the holoenzyme is formed, which can initiate transcription.

It carries out the reaction RNA(n) + a ribonucleoside 5'-triphosphate = RNA(n+1) + diphosphate. In terms of biological role, promotes RNA polymerase assembly. Latches the N- and C-terminal regions of the beta' subunit thereby facilitating its interaction with the beta and alpha subunits. This chain is DNA-directed RNA polymerase subunit omega, found in Pseudomonas entomophila (strain L48).